The following is a 352-amino-acid chain: NADP-dependent oxidoreductase RED1 (352 aa).

NADP(+) contacts are provided by residues G166–G169, K192, Y208, N231, and F285–V287.

Belongs to the NADP-dependent oxidoreductase L4BD family.

It functions in the pathway mycotoxin biosynthesis. Its function is as follows. NADP-dependent oxidoreductase; part of the Tox1B locus, one of the 2 loci that mediate the biosynthesis of T-toxin, a family of linear polyketides 37 to 45 carbons in length, of which the major component is 41 carbons, and which leads to high virulence to maize. One of the PKSs (PKS1 or PKS2) could synthesize a precursor, used subsequently by the other PKS as starter unit, to add additional carbons. Variability in the length of the final carbon backbone C35-47 could be achieved by varying the number of condensation cycles, or use of different starter or extender units or might be due to decarboxylation of the penultimate product, catalyzed by DEC1. Additional proteins are required for the biosynthesis of T-toxin, including oxidoreductases RED1, RED2, RED3, LAM1 and OXI1, as well as esterase TOX9. The polypeptide is NADP-dependent oxidoreductase RED1 (Cochliobolus heterostrophus (strain C4 / ATCC 48331 / race T) (Southern corn leaf blight fungus)).